Here is a 492-residue protein sequence, read N- to C-terminus: Alpha/beta hydrolase ucsC (492 aa).

The active-site Nucleophile is Ser258.

It belongs to the AB hydrolase superfamily. FUS2 hydrolase family. Homodimer.

It participates in mycotoxin biosynthesis. Functionally, alpha/beta hydrolase; part of the gene cluster that mediates the biosynthesis of UCS1025A, a member of the pyrrolizidinone family that acts as a strong telomerase inhibitor and displays potent antibacterial and antitumor properties. These compounds share a hemiaminal-containing pyrrolizidinone core fused with a gamma-lactone, giving a furopyrrolizidine that is connected to a decalin fragment. The polyketide synthase module (PKS) of the PKS-NRPS ucsA is responsible for the synthesis of the polyketide backbone via the condensation of an acetyl-CoA starter unit with 6 malonyl-CoA units. The downstream nonribosomal peptide synthetase (NRPS) module then amidates the carboxyl end of the polyketide with a 2S,3S-methylproline derived from L-isoleucine by the 2-oxoglutarate-dependent dioxygenase ucsF which converts L-isoleucine to (4S,5S)-4-methylpyrroline-5-carboxylate that is further converted to 2S,3S-methylproline by the pyrroline-5-carboxylate reductase ucsG. Reductive release of the completed aminoacyl polyketide from the assembly line can form the 3-pyrrolin-2-one structure via an intramolecular Knoevenagel reaction. Because ucsA lacks a designated enoylreductase (ER) domain, the required activity is provided the enoyl reductase ucsL. This keto acyclic precursor is the substrate of the Diels-Alderase ucsH, that catalyzes the Diels-Alder cycloaddition. Oxidation of the 3S-methyl group to a carboxylate by the cytochrome P450 monooxygenase ucsK allows an oxa-Michael cyclization that might involve the reductase/dehydrogenase ucsI and which furnishes the furopyrrolizidine. The oxidase ucsJ likely plays a critical role in stereoselective reduction of the C5-C6 double bond to afford the required R-configured carboxylate group. Further enolization and oxidation at C5 by an unidentified enzyme affords the last intermediate that can undergo oxa-Michael cyclization to yield UCS1025A. The protein is Alpha/beta hydrolase ucsC of Acremonium sp.